A 262-amino-acid chain; its full sequence is Phosphatidylserine decarboxylase proenzyme (262 aa).

Active-site charge relay system; for autoendoproteolytic cleavage activity residues include Asp86, His142, and Ser226. Catalysis depends on Ser226, which acts as the Schiff-base intermediate with substrate; via pyruvic acid; for decarboxylase activity. Ser226 is subject to Pyruvic acid (Ser); by autocatalysis.

Belongs to the phosphatidylserine decarboxylase family. PSD-B subfamily. Prokaryotic type I sub-subfamily. Heterodimer of a large membrane-associated beta subunit and a small pyruvoyl-containing alpha subunit. It depends on pyruvate as a cofactor. In terms of processing, is synthesized initially as an inactive proenzyme. Formation of the active enzyme involves a self-maturation process in which the active site pyruvoyl group is generated from an internal serine residue via an autocatalytic post-translational modification. Two non-identical subunits are generated from the proenzyme in this reaction, and the pyruvate is formed at the N-terminus of the alpha chain, which is derived from the carboxyl end of the proenzyme. The autoendoproteolytic cleavage occurs by a canonical serine protease mechanism, in which the side chain hydroxyl group of the serine supplies its oxygen atom to form the C-terminus of the beta chain, while the remainder of the serine residue undergoes an oxidative deamination to produce ammonia and the pyruvoyl prosthetic group on the alpha chain. During this reaction, the Ser that is part of the protease active site of the proenzyme becomes the pyruvoyl prosthetic group, which constitutes an essential element of the active site of the mature decarboxylase.

It is found in the cell membrane. It catalyses the reaction a 1,2-diacyl-sn-glycero-3-phospho-L-serine + H(+) = a 1,2-diacyl-sn-glycero-3-phosphoethanolamine + CO2. Its pathway is phospholipid metabolism; phosphatidylethanolamine biosynthesis; phosphatidylethanolamine from CDP-diacylglycerol: step 2/2. In terms of biological role, catalyzes the formation of phosphatidylethanolamine (PtdEtn) from phosphatidylserine (PtdSer). This is Phosphatidylserine decarboxylase proenzyme from Bacillus cereus (strain ATCC 10987 / NRS 248).